The primary structure comprises 449 residues: 23S rRNA (uracil(1939)-C(5))-methyltransferase RlmD (449 aa).

The TRAM domain occupies 1 to 66 (MGRSRHHNKL…AKFDEAKVVE (66 aa)). [4Fe-4S] cluster is bound by residues cysteine 79, cysteine 85, cysteine 88, and cysteine 169. S-adenosyl-L-methionine contacts are provided by glutamine 280, phenylalanine 309, asparagine 314, glutamate 330, asparagine 357, and aspartate 379. Cysteine 405 (nucleophile) is an active-site residue.

Belongs to the class I-like SAM-binding methyltransferase superfamily. RNA M5U methyltransferase family. RlmD subfamily.

It carries out the reaction uridine(1939) in 23S rRNA + S-adenosyl-L-methionine = 5-methyluridine(1939) in 23S rRNA + S-adenosyl-L-homocysteine + H(+). In terms of biological role, catalyzes the formation of 5-methyl-uridine at position 1939 (m5U1939) in 23S rRNA. The protein is 23S rRNA (uracil(1939)-C(5))-methyltransferase RlmD of Francisella tularensis subsp. tularensis (strain FSC 198).